A 452-amino-acid chain; its full sequence is Argininosuccinate lyase (452 aa).

Residues 431-452 form a disordered region; that stretch reads AFRKDSTGSTSPKWSFRAMRRA.

Belongs to the lyase 1 family. Argininosuccinate lyase subfamily.

The protein localises to the cytoplasm. The enzyme catalyses 2-(N(omega)-L-arginino)succinate = fumarate + L-arginine. The protein operates within amino-acid biosynthesis; L-arginine biosynthesis; L-arginine from L-ornithine and carbamoyl phosphate: step 3/3. In Tremblaya princeps, this protein is Argininosuccinate lyase.